The following is a 217-amino-acid chain: Large ribosomal subunit protein uL29m (217 aa).

It belongs to the universal ribosomal protein uL29 family. In terms of assembly, component of the mitochondrial large ribosomal subunit. Mature mitochondrial ribosomes consist of a small (37S) and a large (54S) subunit. The 37S subunit contains at least 33 different proteins and 1 molecule of RNA (15S). The 54S subunit contains at least 45 different proteins and 1 molecule of RNA (21S).

It is found in the mitochondrion. The polypeptide is Large ribosomal subunit protein uL29m (mrpl4) (Aspergillus clavatus (strain ATCC 1007 / CBS 513.65 / DSM 816 / NCTC 3887 / NRRL 1 / QM 1276 / 107)).